We begin with the raw amino-acid sequence, 101 residues long: Large ribosomal subunit protein bL20 (101 aa).

This sequence belongs to the bacterial ribosomal protein bL20 family.

Its function is as follows. Binds directly to 23S ribosomal RNA and is necessary for the in vitro assembly process of the 50S ribosomal subunit. It is not involved in the protein synthesizing functions of that subunit. The sequence is that of Large ribosomal subunit protein bL20 (rplT) from Carsonella ruddii (strain PV).